The sequence spans 152 residues: 6,7-dimethyl-8-ribityllumazine synthase (152 aa).

5-amino-6-(D-ribitylamino)uracil is bound by residues Phe-21, 55–57 (AFE), and 79–81 (CVI). Residue 84-85 (AT) participates in (2S)-2-hydroxy-3-oxobutyl phosphate binding. The Proton donor role is filled by His-87. 5-amino-6-(D-ribitylamino)uracil is bound at residue Phe-112. A (2S)-2-hydroxy-3-oxobutyl phosphate-binding site is contributed by Arg-126.

It belongs to the DMRL synthase family. As to quaternary structure, forms an icosahedral capsid composed of 60 subunits, arranged as a dodecamer of pentamers.

It carries out the reaction (2S)-2-hydroxy-3-oxobutyl phosphate + 5-amino-6-(D-ribitylamino)uracil = 6,7-dimethyl-8-(1-D-ribityl)lumazine + phosphate + 2 H2O + H(+). It participates in cofactor biosynthesis; riboflavin biosynthesis; riboflavin from 2-hydroxy-3-oxobutyl phosphate and 5-amino-6-(D-ribitylamino)uracil: step 1/2. Its function is as follows. Catalyzes the formation of 6,7-dimethyl-8-ribityllumazine by condensation of 5-amino-6-(D-ribitylamino)uracil with 3,4-dihydroxy-2-butanone 4-phosphate. This is the penultimate step in the biosynthesis of riboflavin. This chain is 6,7-dimethyl-8-ribityllumazine synthase, found in Staphylococcus haemolyticus (strain JCSC1435).